The sequence spans 721 residues: Polyribonucleotide nucleotidyltransferase (721 aa).

Mg(2+) is bound by residues Asp-487 and Asp-493. The region spanning 554-613 (PRIETFKIPTDKIREVIGTGGKVIREIVEKTGAKVNIDDDGTVKVASSDGESIKAAIKWI) is the KH domain. In terms of domain architecture, S1 motif spans 623–691 (NAIYDGTVVK…DRGKTRLSMK (69 aa)). Residues 697 to 721 (TGEDLEAKQKAEAEKAKAEGAPAAE) are disordered. Residues 701-714 (LEAKQKAEAEKAKA) show a composition bias toward basic and acidic residues.

This sequence belongs to the polyribonucleotide nucleotidyltransferase family. It depends on Mg(2+) as a cofactor.

The protein resides in the cytoplasm. The catalysed reaction is RNA(n+1) + phosphate = RNA(n) + a ribonucleoside 5'-diphosphate. Involved in mRNA degradation. Catalyzes the phosphorolysis of single-stranded polyribonucleotides processively in the 3'- to 5'-direction. The polypeptide is Polyribonucleotide nucleotidyltransferase (Rhodopseudomonas palustris (strain BisA53)).